The chain runs to 30 residues: Alpha-conotoxin EIVA (30 aa).

Intrachain disulfides connect cysteine 2–cysteine 16, cysteine 3–cysteine 11, and cysteine 14–cysteine 24. Residues proline 7, proline 13, proline 21, proline 22, and proline 27 each carry the 4-hydroxyproline modification. Glycine 30 carries the post-translational modification Glycine amide.

As to expression, expressed by the venom duct.

It is found in the secreted. Its function is as follows. Alpha-conotoxins act on postsynaptic membranes, they bind to the nicotinic acetylcholine receptors (nAChR) and thus inhibit them. This toxin binds with high affinity to both fetal (alpha-1-beta-1-epsilon-delta (CHRNA1-CHRNB1-CHRND-CHRNE) subunits) and adult (alpha-1/beta-1/gamma/delta subunits) mammalian muscle nicotinic acetylcholine receptors (nAChR). The protein is Alpha-conotoxin EIVA of Conus ermineus (Agate cone).